Here is a 309-residue protein sequence, read N- to C-terminus: Methionyl-tRNA formyltransferase (309 aa).

Residue 112-115 coordinates (6S)-5,6,7,8-tetrahydrofolate; it reads SLLP.

Belongs to the Fmt family.

It carries out the reaction L-methionyl-tRNA(fMet) + (6R)-10-formyltetrahydrofolate = N-formyl-L-methionyl-tRNA(fMet) + (6S)-5,6,7,8-tetrahydrofolate + H(+). Functionally, attaches a formyl group to the free amino group of methionyl-tRNA(fMet). The formyl group appears to play a dual role in the initiator identity of N-formylmethionyl-tRNA by promoting its recognition by IF2 and preventing the misappropriation of this tRNA by the elongation apparatus. This Bartonella quintana (strain Toulouse) (Rochalimaea quintana) protein is Methionyl-tRNA formyltransferase.